The following is a 334-amino-acid chain: Holliday junction branch migration complex subunit RuvB (334 aa).

The segment at 4–184 (EDRLISGTQK…FGIVQRLEYY (181 aa)) is large ATPase domain (RuvB-L). ATP is bound by residues I23, R24, G65, K68, T69, T70, 131–133 (EDY), R174, Y184, and R221. T69 provides a ligand contact to Mg(2+). Residues 185–255 (DLKSLTRIVL…VAKLALDMLE (71 aa)) form a small ATPAse domain (RuvB-S) region. A head domain (RuvB-H) region spans residues 258-334 (NEGFDYMDRK…YLHFGFDKPQ (77 aa)). DNA-binding residues include R313 and R318.

It belongs to the RuvB family. As to quaternary structure, homohexamer. Forms an RuvA(8)-RuvB(12)-Holliday junction (HJ) complex. HJ DNA is sandwiched between 2 RuvA tetramers; dsDNA enters through RuvA and exits via RuvB. An RuvB hexamer assembles on each DNA strand where it exits the tetramer. Each RuvB hexamer is contacted by two RuvA subunits (via domain III) on 2 adjacent RuvB subunits; this complex drives branch migration. In the full resolvosome a probable DNA-RuvA(4)-RuvB(12)-RuvC(2) complex forms which resolves the HJ.

Its subcellular location is the cytoplasm. The catalysed reaction is ATP + H2O = ADP + phosphate + H(+). Its function is as follows. The RuvA-RuvB-RuvC complex processes Holliday junction (HJ) DNA during genetic recombination and DNA repair, while the RuvA-RuvB complex plays an important role in the rescue of blocked DNA replication forks via replication fork reversal (RFR). RuvA specifically binds to HJ cruciform DNA, conferring on it an open structure. The RuvB hexamer acts as an ATP-dependent pump, pulling dsDNA into and through the RuvAB complex. RuvB forms 2 homohexamers on either side of HJ DNA bound by 1 or 2 RuvA tetramers; 4 subunits per hexamer contact DNA at a time. Coordinated motions by a converter formed by DNA-disengaged RuvB subunits stimulates ATP hydrolysis and nucleotide exchange. Immobilization of the converter enables RuvB to convert the ATP-contained energy into a lever motion, pulling 2 nucleotides of DNA out of the RuvA tetramer per ATP hydrolyzed, thus driving DNA branch migration. The RuvB motors rotate together with the DNA substrate, which together with the progressing nucleotide cycle form the mechanistic basis for DNA recombination by continuous HJ branch migration. Branch migration allows RuvC to scan DNA until it finds its consensus sequence, where it cleaves and resolves cruciform DNA. The protein is Holliday junction branch migration complex subunit RuvB of Psychromonas ingrahamii (strain DSM 17664 / CCUG 51855 / 37).